A 267-amino-acid chain; its full sequence is UPF0328 protein ECU06_0070 (267 aa).

It belongs to the UPF0328 family.

The sequence is that of UPF0328 protein ECU06_0070 from Encephalitozoon cuniculi (strain GB-M1) (Microsporidian parasite).